Reading from the N-terminus, the 831-residue chain is Protein translocase subunit SecA (831 aa).

ATP-binding positions include Gln-88, 106–110, and Asp-495; that span reads GEGKT. Residues Cys-816, Cys-818, Cys-827, and Cys-828 each contribute to the Zn(2+) site.

This sequence belongs to the SecA family. Monomer and homodimer. Part of the essential Sec protein translocation apparatus which comprises SecA, SecYEG and auxiliary proteins SecDF-YajC and YidC. Zn(2+) is required as a cofactor.

It localises to the cell membrane. The protein resides in the cytoplasm. It carries out the reaction ATP + H2O + cellular proteinSide 1 = ADP + phosphate + cellular proteinSide 2.. Functionally, part of the Sec protein translocase complex. Interacts with the SecYEG preprotein conducting channel. Has a central role in coupling the hydrolysis of ATP to the transfer of proteins into and across the cell membrane, serving as an ATP-driven molecular motor driving the stepwise translocation of polypeptide chains across the membrane. The polypeptide is Protein translocase subunit SecA (Lawsonia intracellularis (strain PHE/MN1-00)).